We begin with the raw amino-acid sequence, 221 residues long: Glutathione S-transferase U25 (221 aa).

Ala-2 carries the post-translational modification N-acetylalanine. Residues 3–82 (DEVILLDFWP…YIDEVWPSKT (80 aa)) form the GST N-terminal domain. Residues 13-14 (SM), 39-40 (NK), 53-54 (KI), and 66-67 (ES) each bind glutathione. Residues 88–208 (DPYQRAQAKF…LPDSEKIIKF (121 aa)) enclose the GST C-terminal domain. Thr-149 carries the post-translational modification Phosphothreonine.

This sequence belongs to the GST superfamily. Tau family.

The protein localises to the cytoplasm. It localises to the cytosol. It carries out the reaction RX + glutathione = an S-substituted glutathione + a halide anion + H(+). In terms of biological role, may be involved in the conjugation of reduced glutathione to a wide number of exogenous and endogenous hydrophobic electrophiles and have a detoxification role against certain herbicides. This chain is Glutathione S-transferase U25 (GSTU25), found in Arabidopsis thaliana (Mouse-ear cress).